The chain runs to 205 residues: Thiamine-phosphate synthase (205 aa).

Residues Gln-37–Lys-41 and Asn-69 contribute to the 4-amino-2-methyl-5-(diphosphooxymethyl)pyrimidine site. The Mg(2+) site is built by Asp-70 and Asp-89. Ser-108 is a binding site for 4-amino-2-methyl-5-(diphosphooxymethyl)pyrimidine. Position 134–136 (Thr-134–Ser-136) interacts with 2-[(2R,5Z)-2-carboxy-4-methylthiazol-5(2H)-ylidene]ethyl phosphate. A 4-amino-2-methyl-5-(diphosphooxymethyl)pyrimidine-binding site is contributed by Lys-137. 2-[(2R,5Z)-2-carboxy-4-methylthiazol-5(2H)-ylidene]ethyl phosphate-binding positions include Gly-165 and Ile-185 to Ser-186.

The protein belongs to the thiamine-phosphate synthase family. Mg(2+) serves as cofactor.

The catalysed reaction is 2-[(2R,5Z)-2-carboxy-4-methylthiazol-5(2H)-ylidene]ethyl phosphate + 4-amino-2-methyl-5-(diphosphooxymethyl)pyrimidine + 2 H(+) = thiamine phosphate + CO2 + diphosphate. The enzyme catalyses 2-(2-carboxy-4-methylthiazol-5-yl)ethyl phosphate + 4-amino-2-methyl-5-(diphosphooxymethyl)pyrimidine + 2 H(+) = thiamine phosphate + CO2 + diphosphate. It carries out the reaction 4-methyl-5-(2-phosphooxyethyl)-thiazole + 4-amino-2-methyl-5-(diphosphooxymethyl)pyrimidine + H(+) = thiamine phosphate + diphosphate. It functions in the pathway cofactor biosynthesis; thiamine diphosphate biosynthesis; thiamine phosphate from 4-amino-2-methyl-5-diphosphomethylpyrimidine and 4-methyl-5-(2-phosphoethyl)-thiazole: step 1/1. Functionally, condenses 4-methyl-5-(beta-hydroxyethyl)thiazole monophosphate (THZ-P) and 2-methyl-4-amino-5-hydroxymethyl pyrimidine pyrophosphate (HMP-PP) to form thiamine monophosphate (TMP). In Clostridium botulinum (strain Loch Maree / Type A3), this protein is Thiamine-phosphate synthase.